The chain runs to 246 residues: tRNA (guanine-N(1)-)-methyltransferase (246 aa).

S-adenosyl-L-methionine contacts are provided by residues glycine 113 and 132–137; that span reads LGDYVL.

The protein belongs to the RNA methyltransferase TrmD family. Homodimer.

The protein resides in the cytoplasm. The catalysed reaction is guanosine(37) in tRNA + S-adenosyl-L-methionine = N(1)-methylguanosine(37) in tRNA + S-adenosyl-L-homocysteine + H(+). In terms of biological role, specifically methylates guanosine-37 in various tRNAs. This Lactiplantibacillus plantarum (strain ATCC BAA-793 / NCIMB 8826 / WCFS1) (Lactobacillus plantarum) protein is tRNA (guanine-N(1)-)-methyltransferase.